The sequence spans 916 residues: Protein translocase subunit SecA (916 aa).

ATP is bound by residues Gln86, 104-108 (GEGKT), and Asp494. The segment at 859–916 (LEAPEKPAQLQYTAPSEGGGTQTRVETRSTGRSGNPAKAAEQDAAKDAAKRPAKKKRR) is disordered. Over residues 880–891 (QTRVETRSTGRS) the composition is skewed to polar residues. Residues 898 to 908 (AEQDAAKDAAK) show a composition bias toward basic and acidic residues.

It belongs to the SecA family. Monomer and homodimer. Part of the essential Sec protein translocation apparatus which comprises SecA, SecYEG and auxiliary proteins SecDF. Other proteins may also be involved.

Its subcellular location is the cell membrane. It localises to the cytoplasm. It catalyses the reaction ATP + H2O + cellular proteinSide 1 = ADP + phosphate + cellular proteinSide 2.. Functionally, part of the Sec protein translocase complex. Interacts with the SecYEG preprotein conducting channel. Has a central role in coupling the hydrolysis of ATP to the transfer of proteins into and across the cell membrane, serving as an ATP-driven molecular motor driving the stepwise translocation of polypeptide chains across the membrane. The protein is Protein translocase subunit SecA of Pseudarthrobacter chlorophenolicus (strain ATCC 700700 / DSM 12829 / CIP 107037 / JCM 12360 / KCTC 9906 / NCIMB 13794 / A6) (Arthrobacter chlorophenolicus).